Reading from the N-terminus, the 729-residue chain is Transketolase (729 aa).

Residue H97 participates in substrate binding. Thiamine diphosphate is bound by residues H138 and 186–188; that span reads GPL. D227 serves as a coordination point for Mg(2+). 2 residues coordinate thiamine diphosphate: G228 and N257. Residues N257 and I259 each contribute to the Mg(2+) site. Residues H332, R423, and S450 each coordinate substrate. H332 contacts thiamine diphosphate. The active-site Proton donor is the E477. F503 serves as a coordination point for thiamine diphosphate. Substrate is bound by residues H527, D535, and R586.

It belongs to the transketolase family. As to quaternary structure, homodimer. It depends on Mg(2+) as a cofactor. Ca(2+) is required as a cofactor. The cofactor is Mn(2+). Co(2+) serves as cofactor. Requires thiamine diphosphate as cofactor.

The catalysed reaction is D-sedoheptulose 7-phosphate + D-glyceraldehyde 3-phosphate = aldehydo-D-ribose 5-phosphate + D-xylulose 5-phosphate. Functionally, catalyzes the transfer of a two-carbon ketol group from a ketose donor to an aldose acceptor, via a covalent intermediate with the cofactor thiamine pyrophosphate. The polypeptide is Transketolase (Streptococcus pyogenes serotype M6 (strain ATCC BAA-946 / MGAS10394)).